A 146-amino-acid polypeptide reads, in one-letter code: Anti-sigma F factor (146 aa).

Belongs to the anti-sigma-factor family.

The enzyme catalyses L-seryl-[protein] + ATP = O-phospho-L-seryl-[protein] + ADP + H(+). The catalysed reaction is L-threonyl-[protein] + ATP = O-phospho-L-threonyl-[protein] + ADP + H(+). Binds to sigma F and blocks its ability to form an RNA polymerase holoenzyme (E-sigma F). Phosphorylates SpoIIAA on a serine residue. This phosphorylation may enable SpoIIAA to act as an anti-anti-sigma factor that counteracts SpoIIAB and thus releases sigma F from inhibition. The chain is Anti-sigma F factor from Bacillus velezensis (strain DSM 23117 / BGSC 10A6 / LMG 26770 / FZB42) (Bacillus amyloliquefaciens subsp. plantarum).